Consider the following 328-residue polypeptide: Pyruvate dehydrogenase E1 component subunit beta (328 aa).

Residue E60 participates in thiamine diphosphate binding. Residues I113, I162, and N166 each contribute to the K(+) site.

In terms of assembly, heterodimer of an alpha and a beta chain. Thiamine diphosphate is required as a cofactor.

The protein resides in the plastid. It localises to the chloroplast. The catalysed reaction is N(6)-[(R)-lipoyl]-L-lysyl-[protein] + pyruvate + H(+) = N(6)-[(R)-S(8)-acetyldihydrolipoyl]-L-lysyl-[protein] + CO2. In terms of biological role, the pyruvate dehydrogenase complex catalyzes the overall conversion of pyruvate to acetyl-CoA and CO(2). It contains multiple copies of three enzymatic components: pyruvate dehydrogenase (E1), dihydrolipoamide acetyltransferase (E2) and lipoamide dehydrogenase (E3). This Staurastrum punctulatum (Green alga) protein is Pyruvate dehydrogenase E1 component subunit beta (pdhB).